Reading from the N-terminus, the 270-residue chain is UPF0354 protein BT9727_4425 (270 aa).

The protein belongs to the UPF0354 family.

The sequence is that of UPF0354 protein BT9727_4425 from Bacillus thuringiensis subsp. konkukian (strain 97-27).